Here is a 355-residue protein sequence, read N- to C-terminus: S-adenosylmethionine:tRNA ribosyltransferase-isomerase (355 aa).

This sequence belongs to the QueA family. Monomer.

It is found in the cytoplasm. The enzyme catalyses 7-aminomethyl-7-carbaguanosine(34) in tRNA + S-adenosyl-L-methionine = epoxyqueuosine(34) in tRNA + adenine + L-methionine + 2 H(+). It functions in the pathway tRNA modification; tRNA-queuosine biosynthesis. Transfers and isomerizes the ribose moiety from AdoMet to the 7-aminomethyl group of 7-deazaguanine (preQ1-tRNA) to give epoxyqueuosine (oQ-tRNA). The protein is S-adenosylmethionine:tRNA ribosyltransferase-isomerase of Burkholderia ambifaria (strain MC40-6).